The following is a 138-amino-acid chain: Cysteine desulfuration protein SufE (138 aa).

The Cysteine persulfide intermediate role is filled by cysteine 51.

It belongs to the SufE family. In terms of assembly, homodimer. Interacts with SufS.

The protein resides in the cytoplasm. It participates in cofactor biosynthesis; iron-sulfur cluster biosynthesis. Its function is as follows. Participates in cysteine desulfuration mediated by SufS. Cysteine desulfuration mobilizes sulfur from L-cysteine to yield L-alanine and constitutes an essential step in sulfur metabolism for biosynthesis of a variety of sulfur-containing biomolecules. Functions as a sulfur acceptor for SufS, by mediating the direct transfer of the sulfur atom from the S-sulfanylcysteine of SufS, an intermediate product of cysteine desulfuration process. This chain is Cysteine desulfuration protein SufE, found in Photorhabdus laumondii subsp. laumondii (strain DSM 15139 / CIP 105565 / TT01) (Photorhabdus luminescens subsp. laumondii).